Here is a 158-residue protein sequence, read N- to C-terminus: Transcriptional repressor NrdR (158 aa).

The disordered stretch occupies residues 1–20; the sequence is MRCPSCGSLDTQVKDSRPTE. Residues 3–34 fold into a zinc finger; it reads CPSCGSLDTQVKDSRPTEDSSVIRRRRVCLTC. Positions 49-139 constitute an ATP-cone domain; that stretch reads LTVIKRNGRR…VYRNFREAKD (91 aa).

It belongs to the NrdR family. Zn(2+) is required as a cofactor.

Functionally, negatively regulates transcription of bacterial ribonucleotide reductase nrd genes and operons by binding to NrdR-boxes. The polypeptide is Transcriptional repressor NrdR (Afipia carboxidovorans (strain ATCC 49405 / DSM 1227 / KCTC 32145 / OM5) (Oligotropha carboxidovorans)).